We begin with the raw amino-acid sequence, 234 residues long: Small ribosomal subunit protein uS10m (234 aa).

Residues 1 to 23 constitute a mitochondrion transit peptide; that stretch reads MLRIGYRGFSTRSRVFKLSPQEY.

The protein belongs to the universal ribosomal protein uS10 family. In terms of assembly, component of the mitochondrial small ribosomal subunit (mt-SSU).

The protein resides in the mitochondrion. Its function is as follows. Component of the mitochondrial ribosome (mitoribosome), a dedicated translation machinery responsible for the synthesis of mitochondrial genome-encoded proteins, including at least some of the essential transmembrane subunits of the mitochondrial respiratory chain. The mitoribosomes are attached to the mitochondrial inner membrane and translation products are cotranslationally integrated into the membrane. The protein is Small ribosomal subunit protein uS10m (RSM10) of Candida albicans (strain SC5314 / ATCC MYA-2876) (Yeast).